We begin with the raw amino-acid sequence, 506 residues long: Notoamide biosynthesis cluster transcriptional coactivator notQ' (506 aa).

Positions 11 to 38 form a DNA-binding region, zn(2)-C6 fungal-type; it reads CLVCRHRKVACDRGRPQCGLCRKNGFDC. Residues 73–102 are disordered; sequence GRLSQSQPSQPATERDDLATTPSTGRLAPP. The span at 75-84 shows a compositional bias: polar residues; sequence LSQSQPSQPA.

The protein localises to the nucleus. Transcription factor that probably regulates the expression of the gene cluster that mediates the biosynthesis of notoamide, a fungal indole alkaloid that belongs to a family of natural products containing a characteristic bicyclo[2.2.2]diazaoctane core. The sequence is that of Notoamide biosynthesis cluster transcriptional coactivator notQ' from Aspergillus versicolor.